The following is a 269-amino-acid chain: Hydroxyethylthiazole kinase (269 aa).

A substrate-binding site is contributed by Met45. Residues Arg121 and Thr167 each contribute to the ATP site. A substrate-binding site is contributed by Gly194.

It belongs to the Thz kinase family. The cofactor is Mg(2+).

The catalysed reaction is 5-(2-hydroxyethyl)-4-methylthiazole + ATP = 4-methyl-5-(2-phosphooxyethyl)-thiazole + ADP + H(+). It participates in cofactor biosynthesis; thiamine diphosphate biosynthesis; 4-methyl-5-(2-phosphoethyl)-thiazole from 5-(2-hydroxyethyl)-4-methylthiazole: step 1/1. Its function is as follows. Catalyzes the phosphorylation of the hydroxyl group of 4-methyl-5-beta-hydroxyethylthiazole (THZ). The sequence is that of Hydroxyethylthiazole kinase from Geobacillus sp. (strain WCH70).